We begin with the raw amino-acid sequence, 155 residues long: uncharacterized protein (155 aa).

The N-terminal stretch at methionine 1–alanine 23 is a signal peptide.

This sequence to E.coli YkfB.

This is an uncharacterized protein from Escherichia coli (strain K12).